A 531-amino-acid chain; its full sequence is Peptide chain release factor 3 (531 aa).

The tr-type G domain maps to 13 to 282; the sequence is AKRRTFAIIS…TLIKYAPPPK (270 aa). Residues 22-29, 90-94, and 144-147 contribute to the GTP site; these read SHPDAGKT, DTPGH, and NKLD.

This sequence belongs to the TRAFAC class translation factor GTPase superfamily. Classic translation factor GTPase family. PrfC subfamily.

Its subcellular location is the cytoplasm. In terms of biological role, increases the formation of ribosomal termination complexes and stimulates activities of RF-1 and RF-2. It binds guanine nucleotides and has strong preference for UGA stop codons. It may interact directly with the ribosome. The stimulation of RF-1 and RF-2 is significantly reduced by GTP and GDP, but not by GMP. This is Peptide chain release factor 3 from Psychrobacter cryohalolentis (strain ATCC BAA-1226 / DSM 17306 / VKM B-2378 / K5).